Consider the following 619-residue polypeptide: MSKIIGIDLGTTNSCVAVMEGGEPVVITNSEGARTTPSVVSFQANGERLVGQVAKRQAITNPDKTIMSIKRHMGTDYKVNIDGKDYTPQEISAMILQKLKADAEAYLGEKVTEAVITVPAYFNDAERQATKDAGRIAGLDVKRIINEPTAASLAYGLDKMDSAHKILVYDLGGGTFDVSILDLGDGVFEVVSTNGDARLGGDDFDQRIIDYIAEDFKAQNGIDLRQDKMALQRLKEAAEKAKIELSSSTQTLINLPFITADATGPKHIDMTLTRAKFNELTHDLVERTINIMKEALKSGNVSLNDIDKVILVGGSTRIPAVQEAVKNFTGKEPSKGVNPDECVAMGAAIQAGVLTGDVKDVLLLDVTPLTLGIETLGGVATPLIERNTTIPARKSQIFSTAADNQTSVEIHVVQGERQMAADNKTLGRFTLSGIAPAPRGIPQIEVAFDIDANGIVKVSATDKATGKEANITITASTNLSDAEIDKAVKEAEQFAEEDKKRKEAIEVKNNAEQTVYQTEKTLNELGDKVSAEEKSEIEAKIEEVKKVKDGDDIEAIKKAMEDLTQAFYKVSEKLYQQNGGAQGQGFDPNNMGGANAGAGATNNNDDNVVDADFEVQDDK.

T175 is modified (phosphothreonine; by autocatalysis). The segment at 578-619 (NGGAQGQGFDPNNMGGANAGAGATNNNDDNVVDADFEVQDDK) is disordered. The segment covering 589-606 (NNMGGANAGAGATNNNDD) has biased composition (low complexity). The span at 607 to 619 (NVVDADFEVQDDK) shows a compositional bias: acidic residues.

This sequence belongs to the heat shock protein 70 family.

In terms of biological role, acts as a chaperone. The sequence is that of Chaperone protein DnaK from Clostridium perfringens (strain ATCC 13124 / DSM 756 / JCM 1290 / NCIMB 6125 / NCTC 8237 / Type A).